The following is a 944-amino-acid chain: 2-oxoglutarate dehydrogenase E1 component (944 aa).

The interval 914–944 is disordered; sequence RRRRSSPAEGDPTVHKKEQERIVSDSLTRKN. Residues 925 to 936 are compositionally biased toward basic and acidic residues; the sequence is PTVHKKEQERIV.

The protein belongs to the alpha-ketoglutarate dehydrogenase family. Homodimer. Part of the 2-oxoglutarate dehydrogenase (OGDH) complex composed of E1 (2-oxoglutarate dehydrogenase), E2 (dihydrolipoamide succinyltransferase) and E3 (dihydrolipoamide dehydrogenase); the complex contains multiple copies of the three enzymatic components (E1, E2 and E3). Requires thiamine diphosphate as cofactor.

It carries out the reaction N(6)-[(R)-lipoyl]-L-lysyl-[protein] + 2-oxoglutarate + H(+) = N(6)-[(R)-S(8)-succinyldihydrolipoyl]-L-lysyl-[protein] + CO2. Functionally, E1 component of the 2-oxoglutarate dehydrogenase (OGDH) complex which catalyzes the decarboxylation of 2-oxoglutarate, the first step in the conversion of 2-oxoglutarate to succinyl-CoA and CO(2). The chain is 2-oxoglutarate dehydrogenase E1 component from Bacillus licheniformis (strain ATCC 14580 / DSM 13 / JCM 2505 / CCUG 7422 / NBRC 12200 / NCIMB 9375 / NCTC 10341 / NRRL NRS-1264 / Gibson 46).